The sequence spans 381 residues: Cobalt-precorrin-5B C(1)-methyltransferase (381 aa).

Belongs to the CbiD family.

The catalysed reaction is Co-precorrin-5B + S-adenosyl-L-methionine = Co-precorrin-6A + S-adenosyl-L-homocysteine. It functions in the pathway cofactor biosynthesis; adenosylcobalamin biosynthesis; cob(II)yrinate a,c-diamide from sirohydrochlorin (anaerobic route): step 6/10. Catalyzes the methylation of C-1 in cobalt-precorrin-5B to form cobalt-precorrin-6A. This is Cobalt-precorrin-5B C(1)-methyltransferase from Prochlorococcus marinus (strain NATL2A).